A 292-amino-acid polypeptide reads, in one-letter code: Transcription antiterminator LacT (292 aa).

PRD domains lie at Asn66–Glu170 and Val172–Gln284.

This sequence belongs to the transcriptional antiterminator BglG family.

Mediates positive regulation of the lac operon by functioning as an antiterminator factor of transcription. This is Transcription antiterminator LacT (lacT) from Lacticaseibacillus casei (Lactobacillus casei).